The primary structure comprises 232 residues: Modulator of macroautophagy TMEM150B (232 aa).

Residues 1–6 (MWAWAL) are Cytoplasmic-facing. The helical transmembrane segment at 7 to 27 (LPVFLAVFGTVGLWAVYAIAV) threads the bilayer. Over 28–50 (SNNSVNITIEFPYISTCGAYTPQ) the chain is Extracellular. Asparagine 29 and asparagine 33 each carry an N-linked (GlcNAc...) asparagine glycan. Residues 51 to 71 (SCLFAQICNICCVLALWIVVI) traverse the membrane as a helical segment. The Cytoplasmic portion of the chain corresponds to 72-83 (RFQQIRDLGRSS). The helical transmembrane segment at 84–104 (HLNTAGLVLGFISSIGISILG) threads the bilayer. Residues 105 to 115 (NFQQTIIQEVH) lie on the Extracellular side of the membrane. The chain crosses the membrane as a helical span at residues 116-136 (LLGALMAFFLGLAYFWIQAFI). Residues 137–153 (TYFSPPSRDNKWLVPVR) are Cytoplasmic-facing. Residues 154–174 (FVLCSQCTCMVICMFVLHSTG) form a helical membrane-spanning segment. The Extracellular portion of the chain corresponds to 175-177 (FRS). Residues 178–198 (AAAICEWILVMCFFALFGVFA) form a helical membrane-spanning segment. Residues 199–232 (AEFRHIDFHKLTVQKEGLKVANNDNVVWTVQDVQ) are Cytoplasmic-facing.

The protein belongs to the DRAM/TMEM150 family.

The protein localises to the cell membrane. Its subcellular location is the endosome membrane. It is found in the cytoplasmic vesicle. The protein resides in the autophagosome membrane. Functionally, modulator of macroautophagy that causes accumulation of autophagosomes under basal conditions and enhances autophagic flux. Represses cell death and promotes long-term clonogenic survival of cells grown in the absence of glucose in a macroautophagy-independent manner. May have some role in extracellular matrix engulfment or growth factor receptor recycling, both of which can modulate cell survival. The chain is Modulator of macroautophagy TMEM150B from Danio rerio (Zebrafish).